Consider the following 313-residue polypeptide: MKVTIIGASGRVGSATALLLAKEPFMKDLVLIGREHSINKLEGLREDIYDALAGTRSDANIYVESDENLRIIDESDVVIITSGVPRKEGMSRMDLAKTNAKIVGKYAKKIAEICDTKIFVITNPVDVMTYKALVDSKFERNQVFGLGTHLDSLRFKVAIAKFFGVHIDEVRTRIIGEHGDSMVPLLSATSIGGIPIQKFERFKELPIDEIIEDVKTKGEQIIRLKGGSEFGPAAAILNVVRCIVNNEKRLLTLSAYVDGEFDGIRDVCIGVPVKIGRDGIEEVVSIELDKDEIIAFRKSAEIIKKYCEEVKNL.

NADP(+)-binding positions include 7 to 13 and 34 to 37; these read GASGRVG and REHS. Substrate-binding residues include arginine 86 and arginine 92. NADP(+)-binding positions include asparagine 99 and 121 to 123; that span reads ITN. Substrate is bound by residues asparagine 123 and arginine 154. Histidine 178 serves as the catalytic Proton acceptor.

Belongs to the LDH/MDH superfamily. In terms of assembly, homotetramer.

It localises to the cytoplasm. The catalysed reaction is a (2S)-2-hydroxycarboxylate + NAD(+) = a 2-oxocarboxylate + NADH + H(+). The enzyme catalyses a (2S)-2-hydroxycarboxylate + NADP(+) = a 2-oxocarboxylate + NADPH + H(+). In terms of biological role, catalyzes the reversible oxidation of (S)-malate and (S)-sulfolactate to oxaloacetate and sulfopyruvate, respectively. Can use both NADH and NADPH, although activity is higher with NADPH. Oxidation of (S)-sulfolactate is observed only in the presence of NADP(+). Can also oxidize tartrate. Cannot reduce pyruvate, nor alpha-ketoglutarate. This is L-2-hydroxycarboxylate dehydrogenase (NAD(P)(+)) (mdh) from Methanocaldococcus jannaschii (strain ATCC 43067 / DSM 2661 / JAL-1 / JCM 10045 / NBRC 100440) (Methanococcus jannaschii).